The primary structure comprises 240 residues: Ubiquinone biosynthesis O-methyltransferase (240 aa).

S-adenosyl-L-methionine contacts are provided by Arg-44, Gly-64, Asp-85, and Met-129.

This sequence belongs to the methyltransferase superfamily. UbiG/COQ3 family.

It catalyses the reaction a 3-demethylubiquinol + S-adenosyl-L-methionine = a ubiquinol + S-adenosyl-L-homocysteine + H(+). The catalysed reaction is a 3-(all-trans-polyprenyl)benzene-1,2-diol + S-adenosyl-L-methionine = a 2-methoxy-6-(all-trans-polyprenyl)phenol + S-adenosyl-L-homocysteine + H(+). It functions in the pathway cofactor biosynthesis; ubiquinone biosynthesis. In terms of biological role, O-methyltransferase that catalyzes the 2 O-methylation steps in the ubiquinone biosynthetic pathway. This is Ubiquinone biosynthesis O-methyltransferase from Photorhabdus laumondii subsp. laumondii (strain DSM 15139 / CIP 105565 / TT01) (Photorhabdus luminescens subsp. laumondii).